We begin with the raw amino-acid sequence, 129 residues long: Translation initiation factor 5A (129 aa).

At Lys36 the chain carries Hypusine.

It belongs to the eIF-5A family.

Its subcellular location is the cytoplasm. Functions by promoting the formation of the first peptide bond. The protein is Translation initiation factor 5A (eif5a) of Thermoplasma acidophilum (strain ATCC 25905 / DSM 1728 / JCM 9062 / NBRC 15155 / AMRC-C165).